A 354-amino-acid polypeptide reads, in one-letter code: tRNA pseudouridine synthase D (354 aa).

Asp-86 acts as the Nucleophile in catalysis. The region spanning Gly-162 to Leu-309 is the TRUD domain.

The protein belongs to the pseudouridine synthase TruD family.

The catalysed reaction is uridine(13) in tRNA = pseudouridine(13) in tRNA. Its function is as follows. Responsible for synthesis of pseudouridine from uracil-13 in transfer RNAs. The chain is tRNA pseudouridine synthase D from Methylococcus capsulatus (strain ATCC 33009 / NCIMB 11132 / Bath).